Reading from the N-terminus, the 343-residue chain is Aspartate carbamoyltransferase catalytic subunit (343 aa).

Over residues 1-14 (MTTDTTGRTGNPAA) the composition is skewed to polar residues. The disordered stretch occupies residues 1–20 (MTTDTTGRTGNPAATASPDR). Residues Arg91 and Thr92 each contribute to the carbamoyl phosphate site. L-aspartate is bound at residue Lys119. Carbamoyl phosphate is bound by residues Arg141, His171, and Gln174. Residues Arg204 and Arg259 each contribute to the L-aspartate site. Residues Gly300 and Pro301 each coordinate carbamoyl phosphate.

Belongs to the aspartate/ornithine carbamoyltransferase superfamily. ATCase family. In terms of assembly, heterododecamer (2C3:3R2) of six catalytic PyrB chains organized as two trimers (C3), and six regulatory PyrI chains organized as three dimers (R2).

It carries out the reaction carbamoyl phosphate + L-aspartate = N-carbamoyl-L-aspartate + phosphate + H(+). It functions in the pathway pyrimidine metabolism; UMP biosynthesis via de novo pathway; (S)-dihydroorotate from bicarbonate: step 2/3. Catalyzes the condensation of carbamoyl phosphate and aspartate to form carbamoyl aspartate and inorganic phosphate, the committed step in the de novo pyrimidine nucleotide biosynthesis pathway. The chain is Aspartate carbamoyltransferase catalytic subunit from Burkholderia lata (strain ATCC 17760 / DSM 23089 / LMG 22485 / NCIMB 9086 / R18194 / 383).